The following is a 185-amino-acid chain: Ribosome-recycling factor (185 aa).

It belongs to the RRF family.

The protein localises to the cytoplasm. In terms of biological role, responsible for the release of ribosomes from messenger RNA at the termination of protein biosynthesis. May increase the efficiency of translation by recycling ribosomes from one round of translation to another. The protein is Ribosome-recycling factor of Treponema denticola (strain ATCC 35405 / DSM 14222 / CIP 103919 / JCM 8153 / KCTC 15104).